We begin with the raw amino-acid sequence, 272 residues long: MSFEEEEEEETFEHTLLVVREVSVYKIPPRTTSGGYKCGEWLQSDKIWSGRLRVVSCKDRCEIRLEDSNSGDLFAACFVDPGRRENSVEPSLDSSRYFVLRIDDGRGKYAFIGLGFAERNEAFDFNVALSDHEKYVRREKEKETGETSESDNHIDIHPAVNHRLKEGETIRINVKPKPTTNGTGMLSAALSGTGKPKPLALAPPPKAAGVTRSPLPPPPNDPVASRIASDGCKESRRNEPLSDLSQLKKNLPSTAGSGSSKSTGAASGWAAF.

2 stretches are compositionally biased toward basic and acidic residues: residues 136-156 (VRRE…HIDI) and 231-240 (GCKESRRNEP). Disordered regions lie at residues 136-157 (VRRE…IDIH) and 174-272 (VKPK…WAAF). Positions 243–252 (DLSQLKKNLP) are enriched in polar residues. Residues 253-272 (STAGSGSSKSTGAASGWAAF) show a composition bias toward low complexity.

This is an uncharacterized protein from Arabidopsis thaliana (Mouse-ear cress).